The following is a 273-amino-acid chain: MNNRVHQGHLARKRFGQNFLNDQFVIDSIVSAINPQKGQAMVEIGPGLAALTEPVGERLDQLTVIELDRDLAARLQTHPFLGPKLTIYQQDAMTMNFGELSEKIGQPLRVFGNLPYNISTPLMFHLFSYTDAIADMHFMLQKEVVNRLVAGPNSKAYGRLSVMAQYYCQVIPVLEVPPSAFTPPPKVDSAVVRLVPHTTMPYPVKDIRVLSRITTEAFNQRRKTIRNSLGNLFSVEVLTELGIDPALRAENISVAQYCQMANYLSENAPSKES.

6 residues coordinate S-adenosyl-L-methionine: Asn-18, Leu-20, Gly-45, Glu-66, Asp-91, and Asn-113.

This sequence belongs to the class I-like SAM-binding methyltransferase superfamily. rRNA adenine N(6)-methyltransferase family. RsmA subfamily.

The protein resides in the cytoplasm. The enzyme catalyses adenosine(1518)/adenosine(1519) in 16S rRNA + 4 S-adenosyl-L-methionine = N(6)-dimethyladenosine(1518)/N(6)-dimethyladenosine(1519) in 16S rRNA + 4 S-adenosyl-L-homocysteine + 4 H(+). Specifically dimethylates two adjacent adenosines (A1518 and A1519) in the loop of a conserved hairpin near the 3'-end of 16S rRNA in the 30S particle. May play a critical role in biogenesis of 30S subunits. The chain is Ribosomal RNA small subunit methyltransferase A from Citrobacter koseri (strain ATCC BAA-895 / CDC 4225-83 / SGSC4696).